The following is a 1492-amino-acid chain: Putative leucine-rich repeat-containing protein DDB_G0290503 (1492 aa).

In terms of domain architecture, PH spans 2–111 (SILLEGYLEK…WIEGIKDAIK (110 aa)). LRR repeat units follow at residues 123–144 (LDGLIKTKDNDIIKLREKIKHL), 180–204 (IKSLTLQLSSKDESMKSLEKQVEKL), 258–284 (QESLNEIKDENNDLQSLIDTQKQQFEK), 329–351 (KNQFSTKLQLVNNEIQSLKSIVD), 352–375 (DKLKEIQLKDNQLTQLNQQHEIDN), 389–413 (ISKISNQLNEKDNKIQELSKQSIDK), 439–462 (LEKLNDINQLSNKLQDKENQILEI), 519–543 (INELQSNLNENQNKINELIENNQSS), 551–575 (LNQLSDKLQEKDEKLKSLESSIIER), 579–603 (IDQLQDNLNEKQDKINELVENNESS), 632–656 (INELQSNLNENQNKINELIENNQSS), 728–752 (LDELQSKLNEKQNEINQLIENNQSS), 806–830 (LKSLDSIIIENQEKLVQLTKSNQDS), 831–855 (LDELQSKLNEKQNEINELIENNQSS), 895–919 (INELQSKLNEKQNKINELVENNESS), 927–951 (LIQLSDQLQEKENQLKSFESSIIER), 955–979 (LNQLQSKLNEKQNEIDQITENNQSS), 1013–1036 (NEKLNEINEKDNKINELIQTNESL), 1044–1068 (FENLEQELEEKNNKILDLNSQIIDV), 1138–1164 (LQDLENELNLEKDTVNEKNDDINELKE), and 1210–1232 (NAHLKINEKDNEIHSLSKEGFNE). Residues 1272–1292 (RSSSSSLHQQQQMISPDLSNS) form a disordered region. A compositionally biased stretch (low complexity) spans 1274-1286 (SSSSLHQQQQMIS). 2 LRR repeats span residues 1424-1444 (SSEKLQSIQLEIDTIREKYFF) and 1445-1468 (AIARSLKLQGAQMGWSMSRSIFDM).

The protein is Putative leucine-rich repeat-containing protein DDB_G0290503 of Dictyostelium discoideum (Social amoeba).